The following is a 114-amino-acid chain: Large ribosomal subunit protein uL22 (114 aa).

The protein belongs to the universal ribosomal protein uL22 family. In terms of assembly, part of the 50S ribosomal subunit.

In terms of biological role, this protein binds specifically to 23S rRNA; its binding is stimulated by other ribosomal proteins, e.g. L4, L17, and L20. It is important during the early stages of 50S assembly. It makes multiple contacts with different domains of the 23S rRNA in the assembled 50S subunit and ribosome. Functionally, the globular domain of the protein is located near the polypeptide exit tunnel on the outside of the subunit, while an extended beta-hairpin is found that lines the wall of the exit tunnel in the center of the 70S ribosome. The sequence is that of Large ribosomal subunit protein uL22 from Myxococcus xanthus (strain DK1622).